A 757-amino-acid polypeptide reads, in one-letter code: MDVNPTLLFLKVPAQNAISTTFPYTGDPPYSHGTGTGYTMDTVNRTHQYSEKGKWTTNTETGAPQLNPIDGPLPEDNEPSGYAQTDCVLEAMAFLEESHPGIFENSCLETIEVVQQTRVDKLTQGRQTYDWTLNRNQPAATALANTIEVFRSNGLTANESGRLIDFLKDVMESMDKEEIEITTHFQRKRRVRDNMTKKMVTQRTIGKKKQRVNKRSYLIRALTLNTMTKDAERGKLKRRAIATPGMQIRGFVYFVETLARSICEKLEQSGLPVGGNEKKAKLANVVRKMMTNSQDTELSFTITGDNTKWNENQNPRMFLAMITYITKNQPEWFRNILSIAPIMFSNKMARLGKGYMFESKRMKLRTQIPAEMLASIDLKYFNESTRKKIEKIRPLLIDGTASLSPGMMMGMFNMLSTVLGVSILNLGQKKYTKTTYWWDGLQSSDDFALIVNAPNHEGIQAGVDRFYRTCKLVGINMSKKKSYINKTGTFEFTSFFYRYGFVANFSMELPSFGVSGINESADMSIGVTVIKNNMINNDLGPATAQMALQLFIKDYRYTYRCHRGDTQIQTRRSFELKKLWDQTQSKAGLLVSDGGPNLYNIRNLHIPEVCLKWELMDEDYQGRLCNPLNPFVSHKEIESVNNAVVMPAHGPAKSMEYDAVATTHSWIPKRNRSILNTSQRGILEDEQMYQKCCNLFEKFFPSSSYRRPVGISSMVEAMVSRARIDARIDFESGRIKKEEFSEIMKICSTIEELRRQK.

The tract at residues 50–82 is disordered; it reads SEKGKWTTNTETGAPQLNPIDGPLPEDNEPSGY. Polar residues predominate over residues 55-64; that stretch reads WTTNTETGAP. Short sequence motifs (nuclear localization signal) lie at residues 187 to 195 and 203 to 216; these read RKRRVRDNM and RTIG…NKRS. Residues 249-256 form a promoter-binding site region; the sequence is RGFVYFVE. In terms of domain architecture, RdRp catalytic spans 286–483; that stretch reads VRKMMTNSQD…GINMSKKKSY (198 aa).

This sequence belongs to the influenza viruses polymerase PB1 family. As to quaternary structure, influenza RNA polymerase is composed of three subunits: PB1, PB2 and PA. Interacts (via N-terminus) with PA (via C-terminus). Interacts (via C-terminus) with PB2 (via N-terminus); this interaction is essential for transcription initiation. Post-translationally, phosphorylated by host PRKCA.

Its subcellular location is the host nucleus. It is found in the host cytoplasm. It carries out the reaction RNA(n) + a ribonucleoside 5'-triphosphate = RNA(n+1) + diphosphate. Functionally, RNA-dependent RNA polymerase which is responsible for replication and transcription of virus RNA segments. The transcription of viral mRNAs occurs by a unique mechanism called cap-snatching. 5' methylated caps of cellular mRNAs are cleaved after 10-13 nucleotides by PA. In turn, these short capped RNAs are used as primers by PB1 for transcription of viral mRNAs. During virus replication, PB1 initiates RNA synthesis and copy vRNA into complementary RNA (cRNA) which in turn serves as a template for the production of more vRNAs. This is RNA-directed RNA polymerase catalytic subunit from Aves (whales).